The following is a 503-amino-acid chain: Xylan O-acetyltransferase 12 (503 aa).

At 1-54 (MWSALFSHLREVHKRSGVKEEKLIMKSPAAAGEAAGCHKPQATATNKMTVLQSP) the chain is on the cytoplasmic side. The chain crosses the membrane as a helical; Signal-anchor for type II membrane protein span at residues 55-77 (LGLRTILTSLVAFFIVVSSVSLL). Topologically, residues 78–503 (FDRSQDAQAQ…EFLYAYLMHK (426 aa)) are lumenal. Intrachain disulfides connect Cys153–Cys204, Cys175–Cys240, Cys184–Cys484, and Cys400–Cys480. 4 N-linked (GlcNAc...) asparagine glycosylation sites follow: Asn154, Asn164, Asn190, and Asn210. Residues 227–229 (GDS) carry the GDS motif motif. Residue Ser229 is the Nucleophile of the active site. N-linked (GlcNAc...) asparagine glycans are attached at residues Asn256, Asn268, Asn373, Asn402, and Asn443. Asp479 serves as the catalytic Proton donor. Residues 479–482 (DCTH) carry the DXXH motif motif. The active-site Proton acceptor is the His482.

The protein belongs to the PC-esterase family. TBL subfamily.

It is found in the golgi apparatus membrane. Xylan acetyltransferase required for 2-O- and 3-O-monoacetylation of xylosyl residues in xylan. Catalyzes the 2-O-acetylation of xylan, followed by nonenzymatic acetyl migration to the O-3 position, resulting in products that are monoacetylated at both O-2 and O-3 positions. This Oryza sativa subsp. japonica (Rice) protein is Xylan O-acetyltransferase 12.